A 310-amino-acid chain; its full sequence is Ornithine carbamoyltransferase (310 aa).

Carbamoyl phosphate is bound by residues 58–61, glutamine 85, arginine 109, and 136–139; these read STRT and HPCQ. Residues asparagine 167, aspartate 227, and 231 to 232 contribute to the L-ornithine site; that span reads SM. Carbamoyl phosphate-binding positions include 266–267 and arginine 294; that span reads CL.

It belongs to the aspartate/ornithine carbamoyltransferase superfamily. OTCase family.

The protein resides in the cytoplasm. It carries out the reaction carbamoyl phosphate + L-ornithine = L-citrulline + phosphate + H(+). Its pathway is amino-acid biosynthesis; L-arginine biosynthesis; L-arginine from L-ornithine and carbamoyl phosphate: step 1/3. Functionally, reversibly catalyzes the transfer of the carbamoyl group from carbamoyl phosphate (CP) to the N(epsilon) atom of ornithine (ORN) to produce L-citrulline. The chain is Ornithine carbamoyltransferase from Rhodopseudomonas palustris (strain ATCC BAA-98 / CGA009).